Here is a 183-residue protein sequence, read N- to C-terminus: Capsid protein (183 aa).

Residues 136 to 183 are disordered; it reads NAPILSTLPETTVVRRRGRSPRRRTPSPRRRRSQSPRRRRTQSRESQC. Residues 149–176 are compositionally biased toward basic residues; the sequence is VRRRGRSPRRRTPSPRRRRSQSPRRRRT. A phosphoserine; by host mark is found at Ser155, Ser162, and Ser170. One copy of the 1; half-length repeat lies at 155 to 161; the sequence is SPRRRTP. Residues 155-177 form a 3 X 8 AA repeats of S-P-R-R-R-[PR]-[ST]-Q region; that stretch reads SPRRRTPSPRRRRSQSPRRRRTQ. The short motif at 158 to 175 is the Bipartite nuclear localization signal element; that stretch reads RRTPSPRRRRSQSPRRRR. Repeat copies occupy residues 162–169 and 170–177. The RNA binding stretch occupies residues 177–183; that stretch reads QSRESQC.

It belongs to the orthohepadnavirus core antigen family. As to quaternary structure, homodimerizes, then multimerizes. Interacts with cytosol exposed regions of viral L glycoprotein present in the reticulum-to-Golgi compartment. Interacts with human FLNB. Phosphorylated form interacts with host importin alpha; this interaction depends on the exposure of the NLS, which itself depends upon genome maturation and/or phosphorylation of the capsid protein. Interacts with host NUP153. Phosphorylated by host SRPK1, SRPK2, and maybe protein kinase C or GAPDH. Phosphorylation is critical for pregenomic RNA packaging. Protein kinase C phosphorylation is stimulated by HBx protein and may play a role in transport of the viral genome to the nucleus at the late step during the viral replication cycle.

It is found in the virion. The protein resides in the host cytoplasm. Functionally, self assembles to form an icosahedral capsid. Most capsids appear to be large particles with an icosahedral symmetry of T=4 and consist of 240 copies of capsid protein, though a fraction forms smaller T=3 particles consisting of 180 capsid proteins. Entering capsids are transported along microtubules to the nucleus. Phosphorylation of the capsid is thought to induce exposure of nuclear localization signal in the C-terminal portion of the capsid protein that allows binding to the nuclear pore complex via the importin (karyopherin-) alpha and beta. Capsids are imported in intact form through the nuclear pore into the nuclear basket, where it probably binds NUP153. Only capsids that contain the mature viral genome can release the viral DNA and capsid protein into the nucleoplasm. Immature capsids get stuck in the basket. Capsids encapsulate the pre-genomic RNA and the P protein. Pre-genomic RNA is reverse-transcribed into DNA while the capsid is still in the cytoplasm. The capsid can then either be directed to the nucleus, providing more genomes for transcription, or bud through the endoplasmic reticulum to provide new virions. The sequence is that of Capsid protein from Hepatitis B virus genotype D (isolate France/alpha1/1989) (HBV-D).